The chain runs to 322 residues: Ras association domain-containing protein 4 (322 aa).

The segment at 96-161 (EASPQDSKVP…SKSRAPSEAQ (66 aa)) is disordered. A Phosphoserine modification is found at Ser-142. The 90-residue stretch at 175-264 (YNHKTSVFTP…KIFLMEADLS (90 aa)) folds into the Ras-associating domain. The region spanning 271–318 (VAQYIKFEMPVLDSFVEKLKEEEEREIIKLTMKFQALRLTMLQRLEQL) is the SARAH domain.

As to quaternary structure, interacts directly with activated KRAS in a GTP-dependent manner.

Its function is as follows. Potential tumor suppressor. May act as a KRAS effector protein. May promote apoptosis and cell cycle arrest. In Mus musculus (Mouse), this protein is Ras association domain-containing protein 4 (Rassf4).